Here is a 56-residue protein sequence, read N- to C-terminus: Ovomucoid (56 aa).

Residues 6 to 56 (VDCSEYPKPECTAEERPICGSDNKTYGNKCNFCNAVVESNGTLTLRNFGKC) form the Kazal-like domain. Disulfide bonds link Cys-8–Cys-38, Cys-16–Cys-35, and Cys-24–Cys-56. The N-linked (GlcNAc...) asparagine glycan is linked to Asn-45.

Its subcellular location is the secreted. The sequence is that of Ovomucoid from Bambusicola thoracicus (Chinese bamboo-partridge).